The primary structure comprises 500 residues: Potassium voltage-gated channel subfamily V member 1 (500 aa).

Topologically, residues Met-1–Arg-210 are cytoplasmic. Residues Lys-168–Glu-181 are compositionally biased toward basic and acidic residues. Residues Lys-168–Cys-189 form a disordered region. Residues Ile-211 to Ser-231 traverse the membrane as a helical segment. At Ala-232 to Asp-238 the chain is on the extracellular side. The helical transmembrane segment at Leu-239–Leu-259 threads the bilayer. The Cytoplasmic portion of the chain corresponds to Arg-260–Asn-276. Residues Ile-277–Gly-297 traverse the membrane as a helical segment. Residues Ser-298–Arg-309 lie on the Extracellular side of the membrane. The chain crosses the membrane as a helical; Voltage-sensor span at residues Ile-310–Gly-331. Over Leu-332–Glu-345 the chain is Cytoplasmic. The chain crosses the membrane as a helical span at residues Val-346–Phe-366. The Selectivity filter signature appears at Thr-392–Asp-397. Residues Ile-407–Ile-427 traverse the membrane as a helical segment. Residues Asn-428–Phe-500 are Cytoplasmic-facing.

It belongs to the potassium channel family. V (TC 1.A.1.2) subfamily. Kv8.1/KCNV1 sub-subfamily. In terms of assembly, heteromultimer with KCNB1 and KCNB2. Interacts with KCNC4 and KCND1. In terms of tissue distribution, detected in brain.

It is found in the cell membrane. Functionally, potassium channel subunit that does not form functional channels by itself. Modulates KCNB1 and KCNB2 channel activity by shifting the threshold for inactivation to more negative values and by slowing the rate of inactivation. Can down-regulate the channel activity of KCNB1, KCNB2, KCNC4 and KCND1, possibly by trapping them in intracellular membranes. In Homo sapiens (Human), this protein is Potassium voltage-gated channel subfamily V member 1 (KCNV1).